Here is a 538-residue protein sequence, read N- to C-terminus: Non-specific phospholipase C4 (538 aa).

The interval 91 to 112 (KPWDSGKPDPNPGHPNMSGFAQ) is disordered.

The protein belongs to the bacterial phospholipase C family. As to expression, expressed in root tips, cotyledons, on leaf margins, stems, young anthers and funiculus.

Its subcellular location is the cell membrane. It catalyses the reaction a 1,2-diacyl-sn-glycero-3-phosphocholine + H2O = phosphocholine + a 1,2-diacyl-sn-glycerol + H(+). In terms of biological role, non-specific phospholipase C (PLC) which assumes major PLC activity during inorganic phosphate starvation. Substrate preference is phosphatidylcholine (PC), but can also hydrolyze phosphatidylethanolamine (PE) with lower efficiency. Has no activity toward phosphatidic acid (PA). Plays an important role in the supply of both inorganic phosphate and diacylglycerol from membrane-localized phospholipids during phosphate deprivation. May be required for lipid-derived signaling molecules that positively modulate abscisic acid (ABA) response and promote plant tolerance to drought and salt stresses. May be involved in brassinolide-mediated signaling in root development. In Arabidopsis thaliana (Mouse-ear cress), this protein is Non-specific phospholipase C4 (NPC4).